The sequence spans 89 residues: Small ribosomal subunit protein uS15 (89 aa).

This sequence belongs to the universal ribosomal protein uS15 family. As to quaternary structure, part of the 30S ribosomal subunit. Forms a bridge to the 50S subunit in the 70S ribosome, contacting the 23S rRNA.

Its function is as follows. One of the primary rRNA binding proteins, it binds directly to 16S rRNA where it helps nucleate assembly of the platform of the 30S subunit by binding and bridging several RNA helices of the 16S rRNA. Forms an intersubunit bridge (bridge B4) with the 23S rRNA of the 50S subunit in the ribosome. The protein is Small ribosomal subunit protein uS15 of Bartonella quintana (strain Toulouse) (Rochalimaea quintana).